Reading from the N-terminus, the 559-residue chain is MRYSELADLYRRLEKTTLKTLKTKFVADFLKKTPDELLEIVPYLILGKVFPDWDERELGVGEKLLIKAVSMATGVPEKEIEDSVRDTGDLGESVALAIKKKKQKSFFSQPLTIKRVYDTFVKIAEAQGEGSQDRKMKYLANLFMDAEPEEGKYLARTVLGTMRTGVAEGILRDAIAEAFRVKPELVERAYMLTSDFGYVAKIAKLEGNEGLSKVRIQIGKPIRPMLAQNAASVKDALIEMGGEAAFEIKYDGARVQVHKDGDKVIVYSRRLENVTRSIPEVIEAIKAALKPEKAIVEGELVAVGENGRPRPFQYVLRRFRRKYNIDEMIEKIPLELNLFDVMFVDGESLIETKFIDRRNKLEEIVKESEKIKLAEQLITKKVEEAEAFYRRALELGHEGLMAKRLDSIYEPGNRGKKWLKIKPTMENLDLVIIGAEWGEGRRAHLLGSFLVAAYDPHSGEFLPVGKVGSGFTDEDLVEFTKMLKPYIVRQEGKFVEIEPKFVIEVTYQEIQKSPKYKSGFALRFPRYVALREDKSPEEADTIERVAELYELQERFKAKK.

E247 contributes to the ATP binding site. Residue K249 is the N6-AMP-lysine intermediate of the active site. Positions 254, 269, 299, 339, 414, and 420 each coordinate ATP.

It belongs to the ATP-dependent DNA ligase family. As to quaternary structure, monomer. Mg(2+) serves as cofactor.

The catalysed reaction is ATP + (deoxyribonucleotide)n-3'-hydroxyl + 5'-phospho-(deoxyribonucleotide)m = (deoxyribonucleotide)n+m + AMP + diphosphate.. It carries out the reaction NAD(+) + (deoxyribonucleotide)n-3'-hydroxyl + 5'-phospho-(deoxyribonucleotide)m = (deoxyribonucleotide)n+m + AMP + beta-nicotinamide D-nucleotide.. In terms of biological role, DNA ligase that seals nicks in double-stranded DNA during DNA replication, DNA recombination and DNA repair. Can also use NAD, but less efficiently than ATP. In Thermococcus kodakarensis (strain ATCC BAA-918 / JCM 12380 / KOD1) (Pyrococcus kodakaraensis (strain KOD1)), this protein is DNA ligase.